We begin with the raw amino-acid sequence, 113 residues long: U11-theraphotoxin-Hhn1a (113 aa).

A signal peptide spans 1 to 21; that stretch reads MNTVRVTFLLVFVLAVSLGQA. A propeptide spanning residues 22–74 is cleaved from the precursor; that stretch reads DKDENRMEMQEKTEQGNSYLDFAENLPLQKLEELEAKLLEEDSEESRNSRQKR. Over residues 60–69 the composition is skewed to basic and acidic residues; it reads LEEDSEESRN. The segment at 60 to 83 is disordered; it reads LEEDSEESRNSRQKRCIGEGVPCD. 3 cysteine pairs are disulfide-bonded: cysteine 75–cysteine 90, cysteine 82–cysteine 95, and cysteine 89–cysteine 110.

This sequence belongs to the neurotoxin 14 (magi-1) family. 01 (HNTX-16) subfamily. Expressed by the venom gland.

The protein localises to the secreted. Functionally, probable ion channel inhibitor. In Cyriopagopus hainanus (Chinese bird spider), this protein is U11-theraphotoxin-Hhn1a.